The primary structure comprises 331 residues: Probable tRNA pseudouridine synthase B (331 aa).

Residues 1-15 show a composition bias toward basic and acidic residues; that stretch reads MRCSQREVFVKREEP. The tract at residues 1-27 is disordered; the sequence is MRCSQREVFVKREEPTNPEWGKPPSQR. Asp-71 serves as the catalytic Nucleophile. A PUA domain is found at 238–313; sequence LPKIWVRDSA…AVVRTDRVVM (76 aa).

Belongs to the pseudouridine synthase TruB family. Type 2 subfamily.

It catalyses the reaction uridine(55) in tRNA = pseudouridine(55) in tRNA. Its function is as follows. Could be responsible for synthesis of pseudouridine from uracil-55 in the psi GC loop of transfer RNAs. The chain is Probable tRNA pseudouridine synthase B from Pyrobaculum arsenaticum (strain DSM 13514 / JCM 11321 / PZ6).